A 131-amino-acid polypeptide reads, in one-letter code: Translation initiation factor 5A (131 aa).

Residue K37 is modified to Hypusine.

It belongs to the eIF-5A family.

The protein localises to the cytoplasm. In terms of biological role, functions by promoting the formation of the first peptide bond. In Methanococcus maripaludis (strain DSM 14266 / JCM 13030 / NBRC 101832 / S2 / LL), this protein is Translation initiation factor 5A.